The chain runs to 160 residues: Large ribosomal subunit protein uL22c (160 aa).

It belongs to the universal ribosomal protein uL22 family. Part of the 50S ribosomal subunit.

It is found in the plastid. The protein resides in the chloroplast. This protein binds specifically to 23S rRNA. Functionally, the globular domain of the protein is located near the polypeptide exit tunnel on the outside of the subunit, while an extended beta-hairpin is found that lines the wall of the exit tunnel in the center of the 70S ribosome. The protein is Large ribosomal subunit protein uL22c (rpl22) of Capsella bursa-pastoris (Shepherd's purse).